The chain runs to 455 residues: Bifunctional protein GlmU (455 aa).

Residues 1–228 (MTQPLHVIIL…AQEAEGANDP (228 aa)) form a pyrophosphorylase region. UDP-N-acetyl-alpha-D-glucosamine is bound by residues 10 to 13 (LAAG), lysine 24, glutamine 76, 81 to 82 (GT), 103 to 105 (YGD), glycine 138, glutamate 153, asparagine 168, and asparagine 226. Aspartate 105 lines the Mg(2+) pocket. Asparagine 226 lines the Mg(2+) pocket. The tract at residues 229 to 249 (WQLSQLERAWQRRAVRALCAQ) is linker. An N-acetyltransferase region spans residues 250-455 (GARVRDPARL…DGWKRPLKKS (206 aa)). The UDP-N-acetyl-alpha-D-glucosamine site is built by arginine 332 and lysine 350. Histidine 362 functions as the Proton acceptor in the catalytic mechanism. The UDP-N-acetyl-alpha-D-glucosamine site is built by tyrosine 365 and asparagine 376. Residues alanine 379, 385 to 386 (NY), serine 404, alanine 422, and arginine 439 each bind acetyl-CoA.

It in the N-terminal section; belongs to the N-acetylglucosamine-1-phosphate uridyltransferase family. The protein in the C-terminal section; belongs to the transferase hexapeptide repeat family. In terms of assembly, homotrimer. The cofactor is Mg(2+).

It is found in the cytoplasm. The catalysed reaction is alpha-D-glucosamine 1-phosphate + acetyl-CoA = N-acetyl-alpha-D-glucosamine 1-phosphate + CoA + H(+). It catalyses the reaction N-acetyl-alpha-D-glucosamine 1-phosphate + UTP + H(+) = UDP-N-acetyl-alpha-D-glucosamine + diphosphate. The protein operates within nucleotide-sugar biosynthesis; UDP-N-acetyl-alpha-D-glucosamine biosynthesis; N-acetyl-alpha-D-glucosamine 1-phosphate from alpha-D-glucosamine 6-phosphate (route II): step 2/2. Its pathway is nucleotide-sugar biosynthesis; UDP-N-acetyl-alpha-D-glucosamine biosynthesis; UDP-N-acetyl-alpha-D-glucosamine from N-acetyl-alpha-D-glucosamine 1-phosphate: step 1/1. It functions in the pathway bacterial outer membrane biogenesis; LPS lipid A biosynthesis. Catalyzes the last two sequential reactions in the de novo biosynthetic pathway for UDP-N-acetylglucosamine (UDP-GlcNAc). The C-terminal domain catalyzes the transfer of acetyl group from acetyl coenzyme A to glucosamine-1-phosphate (GlcN-1-P) to produce N-acetylglucosamine-1-phosphate (GlcNAc-1-P), which is converted into UDP-GlcNAc by the transfer of uridine 5-monophosphate (from uridine 5-triphosphate), a reaction catalyzed by the N-terminal domain. In Stenotrophomonas maltophilia (strain R551-3), this protein is Bifunctional protein GlmU.